The chain runs to 173 residues: Crossover junction endodeoxyribonuclease RuvC (173 aa).

Residues Asp-8, Glu-67, and Asp-139 contribute to the active site. Residues Asp-8, Glu-67, and Asp-139 each coordinate Mg(2+).

The protein belongs to the RuvC family. Homodimer which binds Holliday junction (HJ) DNA. The HJ becomes 2-fold symmetrical on binding to RuvC with unstacked arms; it has a different conformation from HJ DNA in complex with RuvA. In the full resolvosome a probable DNA-RuvA(4)-RuvB(12)-RuvC(2) complex forms which resolves the HJ. The cofactor is Mg(2+).

It is found in the cytoplasm. The enzyme catalyses Endonucleolytic cleavage at a junction such as a reciprocal single-stranded crossover between two homologous DNA duplexes (Holliday junction).. The RuvA-RuvB-RuvC complex processes Holliday junction (HJ) DNA during genetic recombination and DNA repair. Endonuclease that resolves HJ intermediates. Cleaves cruciform DNA by making single-stranded nicks across the HJ at symmetrical positions within the homologous arms, yielding a 5'-phosphate and a 3'-hydroxyl group; requires a central core of homology in the junction. The consensus cleavage sequence is 5'-(A/T)TT(C/G)-3'. Cleavage occurs on the 3'-side of the TT dinucleotide at the point of strand exchange. HJ branch migration catalyzed by RuvA-RuvB allows RuvC to scan DNA until it finds its consensus sequence, where it cleaves and resolves the cruciform DNA. The chain is Crossover junction endodeoxyribonuclease RuvC from Salmonella agona (strain SL483).